The primary structure comprises 723 residues: ATP-dependent DNA helicase RRM3 (723 aa).

Disordered stretches follow at residues methionine 1–histidine 31 and aspartate 61–proline 101. Serine 64 carries the post-translational modification Phosphoserine. Low complexity predominate over residues asparagine 83 to phenylalanine 96. Glycine 254 to serine 261 contributes to the ATP binding site. Residues glutamine 682 to phenylalanine 701 mediate DNA binding.

Belongs to the helicase family. As to quaternary structure, interacts with DEF1 and POL30.

It localises to the nucleus. The protein resides in the chromosome. It is found in the telomere. It carries out the reaction Couples ATP hydrolysis with the unwinding of duplex DNA at the replication fork by translocating in the 5'-3' direction. This creates two antiparallel DNA single strands (ssDNA). The leading ssDNA polymer is the template for DNA polymerase III holoenzyme which synthesizes a continuous strand.. The enzyme catalyses ATP + H2O = ADP + phosphate + H(+). 5' to 3' DNA replicative helicase recruited to paused replisomes to promote fork progression throughout nonhistone protein-DNA complexes, naturally occurring impediments that are encountered in each S phase where replication forks pauses. Needed for normal fork progression through over 1000 discrete sites scattered throughout the genome, like rDNA, tRNA genes, centromeres, active replication origins, or transcriptional silencers. Required for timely replication of the telomere and subtelomeric DNA and for wild-type levels of telomeric silencing. Involved in regulation of Ty1 transposition and protects the genome from instability at nascent sites of retrotransposition. Involved in DNA repair during stalled replication fork, regulation of fragile sites expression and essential for genome stability. Also plays a role in mtDNA replication. Has G-quadruplex (G4) unwinding activity and can suppress G4-induced genome instability when PIF1 levels are low. The protein is ATP-dependent DNA helicase RRM3 of Saccharomyces cerevisiae (strain ATCC 204508 / S288c) (Baker's yeast).